Reading from the N-terminus, the 1213-residue chain is MSNFRDSSSPRRGYSEFDPESGEGLGRKKSLIRPERSRMDESHPRFHYTQVANQESNHIKVQPSSTGVDPRKSNELSTSRSHLSNYATPPHQEEEEDEGIPLMDIHNASPNVSSDQNNDLKGGREVYGLNDEINDYGSSPKKNQVISSSRPMNNEKPAKPKHDIYFWKVYCYAITFWAPAPLLKLFGLPTKDRQFAWREKIGLISCILYVGAFVAYLTFGFTKTVCSSQVVRTQINHVNGGYLIINGRAYDLTSSQHPKAAGIQAGSNVLYPPMNAGGKDASFLFQNVNGNCKGLIKPRDNCSIPYDGDELAWYMPCRLFNQDGSTKPNNTFAYYKGWACHTSETARDAYYKLKVNGDVYFTWDDVKNSSRNLVVYSGNVLDLDLINWIETDDVTYPELFDKLRDDETYRGLDISLVLTNSEERQAARCLTEIIKVGSIDTDTIGCIASKVVLYMSLVFILSVVVVKFIMACWFKWVTSRKQGATMYDSKAWAKRNREIEDWVDHDHGIGAEVKTVPVKARANYKAAKTNRQSVFHRAQKLSLGPNADLSQYYDNPNALSKTFKYTTMSTQAALLGRNGYGKRGNNANKSVSGGFNGRQSNLYLTDQGSSTDLLNRPVSSYNPFDSMGDDSIVINGLSPDIIHPDVVPQPPVEYQPFGYPLAHTINLVTCYSEDEEGIRITLDSIATTDYPNSHKLILVICDGIIKGSGNDETTPDIVLDMMSDLTVPRDEVEAYSYVAVAQGSKRHNMAKVYAGFYKYNDETVPPEKQQRIPMITIVKCGTPEEASAPKPGNRGKRDSQIILMSFLQKVVFDERMTSLEYEMLQSIWRITGLMAEFYEIVLMVDADTKVFPDSLTHMVAEMVKDPTIMGLCGETKISNKAQTWVTAIQVFEYYISHHQAKAFESIFGGVTCLPGCFCMYRIKAPKGSDGYWVPILANPDIVERYSDNVVDTLHRKNLLLLGEDRYLSSLMLRTFPTRKQVFVPKAACKTVVPDKFKVLLSQRRRWINSTVHNLFELVLVKDLCGTFCFSMQFVIFIELIGTLVLPAAITFTIYVIIVAIVSKPTPVMSLVLLAVIFGLPGCLIVITVSSLSYLVYFVIYLFALPIWNFVLPSYAYWKFDDFSWGETRTVAGGDKGDHSAVEGKFDSSKIAMKRWREWERERRSTENRKQQQQQQLTNNSSNNLAVPGAAWDPSNTGGNLIDDLSQGSSSGSS.

The interval 1–97 (MSNFRDSSSP…TPPHQEEEED (97 aa)) is disordered. Over 1-168 (MSNFRDSSSP…KPKHDIYFWK (168 aa)) the chain is Cytoplasmic. Residues 32 to 44 (IRPERSRMDESHP) are compositionally biased toward basic and acidic residues. The segment covering 75 to 87 (ELSTSRSHLSNYA) has biased composition (polar residues). The helical transmembrane segment at 169 to 189 (VYCYAITFWAPAPLLKLFGLP) threads the bilayer. At 190–200 (TKDRQFAWREK) the chain is on the extracellular side. Residues 201-221 (IGLISCILYVGAFVAYLTFGF) traverse the membrane as a helical segment. Residues 222 to 450 (TKTVCSSQVV…TDTIGCIASK (229 aa)) lie on the Cytoplasmic side of the membrane. The helical transmembrane segment at 451–471 (VVLYMSLVFILSVVVVKFIMA) threads the bilayer. The Extracellular segment spans residues 472–1016 (CWFKWVTSRK…INSTVHNLFE (545 aa)). 2 N-linked (GlcNAc...) asparagine glycosylation sites follow: Asn-588 and Asn-1008. Residues 1017-1037 (LVLVKDLCGTFCFSMQFVIFI) traverse the membrane as a helical segment. Residues 1038–1039 (EL) are Cytoplasmic-facing. The chain crosses the membrane as a helical span at residues 1040–1060 (IGTLVLPAAITFTIYVIIVAI). The Extracellular segment spans residues 1061–1065 (VSKPT). Residues 1066–1086 (PVMSLVLLAVIFGLPGCLIVI) form a helical membrane-spanning segment. Residues 1087–1213 (TVSSLSYLVY…LSQGSSSGSS (127 aa)) are Cytoplasmic-facing. The disordered stretch occupies residues 1161 to 1213 (ERRSTENRKQQQQQQLTNNSSNNLAVPGAAWDPSNTGGNLIDDLSQGSSSGSS).

The protein belongs to the chitin synthase family. Class IV subfamily.

Its subcellular location is the cell membrane. It catalyses the reaction [(1-&gt;4)-N-acetyl-beta-D-glucosaminyl](n) + UDP-N-acetyl-alpha-D-glucosamine = [(1-&gt;4)-N-acetyl-beta-D-glucosaminyl](n+1) + UDP + H(+). Polymerizes chitin, a structural polymer of the cell wall and septum, by transferring the sugar moiety of UDP-GlcNAc to the non-reducing end of the growing chitin polymer. The protein is Chitin synthase 3 (CHS3) of Candida albicans (Yeast).